Here is a 115-residue protein sequence, read N- to C-terminus: NAD(P)H-quinone oxidoreductase subunit M (115 aa).

The protein belongs to the complex I NdhM subunit family. In terms of assembly, NDH-1 can be composed of about 15 different subunits; different subcomplexes with different compositions have been identified which probably have different functions.

It localises to the cellular thylakoid membrane. It catalyses the reaction a plastoquinone + NADH + (n+1) H(+)(in) = a plastoquinol + NAD(+) + n H(+)(out). It carries out the reaction a plastoquinone + NADPH + (n+1) H(+)(in) = a plastoquinol + NADP(+) + n H(+)(out). Its function is as follows. NDH-1 shuttles electrons from an unknown electron donor, via FMN and iron-sulfur (Fe-S) centers, to quinones in the respiratory and/or the photosynthetic chain. The immediate electron acceptor for the enzyme in this species is believed to be plastoquinone. Couples the redox reaction to proton translocation, and thus conserves the redox energy in a proton gradient. Cyanobacterial NDH-1 also plays a role in inorganic carbon-concentration. The protein is NAD(P)H-quinone oxidoreductase subunit M of Prochlorococcus marinus (strain MIT 9215).